Here is a 462-residue protein sequence, read N- to C-terminus: NEDD8-activating enzyme E1 catalytic subunit (462 aa).

Residue alanine 2 is modified to N-acetylalanine. The interval 53–70 (HPDFEPSTESLQFLLDTC) is interaction with UBE2M N-terminus. ATP is bound by residues 100–124 (DMDT…GRPK) and 148–171 (IQDF…SIIA). Interaction with UBE2M N-terminus regions lie at residues 157–161 (RQFHI) and 192–217 (PSSI…LPGM). Residues 227–229 (LYP) form an interaction with NEDD8 region. The active-site Glycyl thioester intermediate is cysteine 237. 2 interaction with NAE1 regions span residues 242–248 (MPRLPEH) and 292–295 (YNIR). The interval 331-338 (IATSAYIP) is interaction with UBE2M N-terminus. Residues 352–357 (YTYTFE) form an interaction with NEDD8 region. Residues 368-462 (SQLPQNIQFS…QTVLFKLHFT (95 aa)) form an interaction with UBE2M core domain region.

This sequence belongs to the ubiquitin-activating E1 family. UBA3 subfamily. As to quaternary structure, heterodimer of UBA3 and NAE1. Interacts with NEDD8, UBE2F and UBE2M. Binds ESR1 and ESR2 with bound steroid ligand. Interacts with TBATA. Ubiquitously expressed.

It carries out the reaction ATP + [NEDD8 protein] + [E1 NEDD8-activating enzyme]-L-cysteine = AMP + diphosphate + [E1 NEDD8-activating enzyme]-S-[NEDD8 protein]-yl-L-cysteine.. Its pathway is protein modification; protein neddylation. Binding of TP53BP2 to the regulatory subunit NAE1 decreases activity. In terms of biological role, catalytic subunit of the dimeric UBA3-NAE1 E1 enzyme. E1 activates NEDD8 by first adenylating its C-terminal glycine residue with ATP, thereafter linking this residue to the side chain of the catalytic cysteine, yielding a NEDD8-UBA3 thioester and free AMP. E1 finally transfers NEDD8 to the catalytic cysteine of UBE2M. Down-regulates steroid receptor activity. Necessary for cell cycle progression. This is NEDD8-activating enzyme E1 catalytic subunit (Uba3) from Rattus norvegicus (Rat).